A 627-amino-acid chain; its full sequence is Spindle assembly abnormal protein 6 homolog (627 aa).

Residues 39–91 form the PISA domain; it reads VHRKDLVVRLTDDTDLYFLYNLIISEEDFQSLKVQQGLLIDFTSFPQKFIDLL. A coiled-coil region spans residues 153 to 473; sequence LASCLSSVKE…SREVLKTNEN (321 aa). 2 disordered regions span residues 187–257 and 561–586; these read QTLS…LQTK and EVSPAAFSQPANKENSEPVGLDSKYF. The segment covering 191 to 201 has biased composition (basic and acidic residues); that stretch reads EKSRELDKLRS. A compositionally biased stretch (polar residues) spans 202–213; the sequence is EWTSQTTSLSSR. Residues 214 to 226 are compositionally biased toward basic and acidic residues; sequence HMQDLTAEREKAL. The span at 229-238 shows a compositional bias: low complexity; that stretch reads QSRLQQQNEQ.

Nine homodimers form a cartwheel structure with an internal diameter of 23 nM and radial spokes connecting to the microtubule triplets.

Its subcellular location is the cytoplasm. It is found in the cytoskeleton. The protein resides in the microtubule organizing center. The protein localises to the centrosome. In terms of biological role, central scaffolding component of the centrioles ensuring their 9-fold symmetry. Required for centrosome biogenesis and duplication: required both for mother-centriole-dependent centriole duplication and deuterosome-dependent centriole amplification in multiciliated cells. The chain is Spindle assembly abnormal protein 6 homolog (sass6) from Danio rerio (Zebrafish).